We begin with the raw amino-acid sequence, 332 residues long: Receptor polysaccharide phosphotransferase WefC (332 aa).

Belongs to the stealth family.

This is Receptor polysaccharide phosphotransferase WefC (wefC) from Streptococcus oralis.